Here is a 324-residue protein sequence, read N- to C-terminus: Elongation factor P--(R)-beta-lysine ligase (324 aa).

Residue 75 to 77 (SPE) coordinates substrate. Residues 99–101 (RNK) and N108 each bind ATP. Y117 contributes to the substrate binding site. 243-244 (EL) contacts ATP. E250 contributes to the substrate binding site. G299 provides a ligand contact to ATP.

It belongs to the class-II aminoacyl-tRNA synthetase family. EpmA subfamily. Homodimer.

The enzyme catalyses D-beta-lysine + L-lysyl-[protein] + ATP = N(6)-((3R)-3,6-diaminohexanoyl)-L-lysyl-[protein] + AMP + diphosphate + H(+). In terms of biological role, with EpmB is involved in the beta-lysylation step of the post-translational modification of translation elongation factor P (EF-P). Catalyzes the ATP-dependent activation of (R)-beta-lysine produced by EpmB, forming a lysyl-adenylate, from which the beta-lysyl moiety is then transferred to the epsilon-amino group of a conserved specific lysine residue in EF-P. This chain is Elongation factor P--(R)-beta-lysine ligase, found in Buchnera aphidicola subsp. Acyrthosiphon pisum (strain APS) (Acyrthosiphon pisum symbiotic bacterium).